Consider the following 78-residue polypeptide: Large ribosomal subunit protein bL28 (78 aa).

The protein belongs to the bacterial ribosomal protein bL28 family.

In Synechococcus sp. (strain CC9311), this protein is Large ribosomal subunit protein bL28.